We begin with the raw amino-acid sequence, 210 residues long: MVKYPTGSVMPLRAAQRQGKKALLKKASFSDRGMTLEQQINESNQYYLDAGIAVVHKKPTPIQIVKVDYPKRSRAVIREAYFRQASTTDYNGVYQGYYLDFEAKETRNKTSFPLKNFHEHQILHLEQCLDQEGICFALIGFMTLERYFVTPASFLIQAWQNWKAAGKSSMTLAEIEANSFEIKSGFCPALPYLEAVDRIIADRKQEHGNK.

Mg(2+) is bound by residues T87, D89, E102, and Q121.

Belongs to the RecU family. It depends on Mg(2+) as a cofactor.

Its subcellular location is the cytoplasm. It catalyses the reaction Endonucleolytic cleavage at a junction such as a reciprocal single-stranded crossover between two homologous DNA duplexes (Holliday junction).. Endonuclease that resolves Holliday junction intermediates in genetic recombination. Cleaves mobile four-strand junctions by introducing symmetrical nicks in paired strands. Promotes annealing of linear ssDNA with homologous dsDNA. Required for DNA repair, homologous recombination and chromosome segregation. In Lactobacillus delbrueckii subsp. bulgaricus (strain ATCC 11842 / DSM 20081 / BCRC 10696 / JCM 1002 / NBRC 13953 / NCIMB 11778 / NCTC 12712 / WDCM 00102 / Lb 14), this protein is Holliday junction resolvase RecU.